The sequence spans 236 residues: MHLKSNFKNINIIIALDFFDENKAMKFIYNLNPTIYALKIGNIMFTLFGVRFIKILQKLGFKIFLDLKFYDIPNTIFGAIQAVANLNIWMVSIHISGGIQMLKSARLALKPFKNKPLLMGVTILTSLDKTDMSKLGIQISLSKYILSLAKIAHKCNLDGIICSGTEISNIKKHINVKNFKILTPGIRLNGCSSNDQKNVTTPMLAKQYNVDYIIIGRIVTSSQNPLKTLELIRSQI.

Substrate contacts are provided by residues D17, K39, D66–T75, T125, R187, Q196, G216, and R217. K68 serves as the catalytic Proton donor.

The protein belongs to the OMP decarboxylase family. Type 1 subfamily. As to quaternary structure, homodimer.

The catalysed reaction is orotidine 5'-phosphate + H(+) = UMP + CO2. The protein operates within pyrimidine metabolism; UMP biosynthesis via de novo pathway; UMP from orotate: step 2/2. Catalyzes the decarboxylation of orotidine 5'-monophosphate (OMP) to uridine 5'-monophosphate (UMP). This chain is Orotidine 5'-phosphate decarboxylase, found in Buchnera aphidicola subsp. Baizongia pistaciae (strain Bp).